Consider the following 101-residue polypeptide: Large ribosomal subunit protein eL36 (101 aa).

Disordered regions lie at residues Met-1–Ser-31 and Gly-75–Glu-101.

It belongs to the eukaryotic ribosomal protein eL36 family.

The protein is Large ribosomal subunit protein eL36 (RL36) of Ulva compressa (Green alga).